We begin with the raw amino-acid sequence, 508 residues long: ATP synthase subunit alpha (508 aa).

Gly-170 to Thr-177 is an ATP binding site.

It belongs to the ATPase alpha/beta chains family. In terms of assembly, F-type ATPases have 2 components, CF(1) - the catalytic core - and CF(0) - the membrane proton channel. CF(1) has five subunits: alpha(3), beta(3), gamma(1), delta(1), epsilon(1). CF(0) has three main subunits: a(1), b(2) and c(9-12). The alpha and beta chains form an alternating ring which encloses part of the gamma chain. CF(1) is attached to CF(0) by a central stalk formed by the gamma and epsilon chains, while a peripheral stalk is formed by the delta and b chains.

The protein resides in the cell inner membrane. The enzyme catalyses ATP + H2O + 4 H(+)(in) = ADP + phosphate + 5 H(+)(out). Produces ATP from ADP in the presence of a proton gradient across the membrane. The alpha chain is a regulatory subunit. The sequence is that of ATP synthase subunit alpha from Dictyoglomus turgidum (strain DSM 6724 / Z-1310).